Reading from the N-terminus, the 102-residue chain is Pyrimidine/purine nucleoside phosphorylase (102 aa).

Belongs to the nucleoside phosphorylase PpnP family.

The enzyme catalyses a purine D-ribonucleoside + phosphate = a purine nucleobase + alpha-D-ribose 1-phosphate. It catalyses the reaction adenosine + phosphate = alpha-D-ribose 1-phosphate + adenine. The catalysed reaction is cytidine + phosphate = cytosine + alpha-D-ribose 1-phosphate. It carries out the reaction guanosine + phosphate = alpha-D-ribose 1-phosphate + guanine. The enzyme catalyses inosine + phosphate = alpha-D-ribose 1-phosphate + hypoxanthine. It catalyses the reaction thymidine + phosphate = 2-deoxy-alpha-D-ribose 1-phosphate + thymine. The catalysed reaction is uridine + phosphate = alpha-D-ribose 1-phosphate + uracil. It carries out the reaction xanthosine + phosphate = alpha-D-ribose 1-phosphate + xanthine. Functionally, catalyzes the phosphorolysis of diverse nucleosides, yielding D-ribose 1-phosphate and the respective free bases. Can use uridine, adenosine, guanosine, cytidine, thymidine, inosine and xanthosine as substrates. Also catalyzes the reverse reactions. This Shewanella amazonensis (strain ATCC BAA-1098 / SB2B) protein is Pyrimidine/purine nucleoside phosphorylase.